We begin with the raw amino-acid sequence, 57 residues long: Mambalgin-3 (57 aa).

Intrachain disulfides connect cysteine 3–cysteine 19, cysteine 12–cysteine 37, cysteine 41–cysteine 49, and cysteine 50–cysteine 55.

It belongs to the three-finger toxin family. Short-chain subfamily. Mambalgin sub-subfamily. As to expression, expressed by the venom gland.

It localises to the secreted. Its function is as follows. This three-finger toxin inhibits ASIC channels. It acts as a gating modifier toxin by decreasing the apparent proton sensitivity of activation and by slightly increasing the apparent proton sensitivity for inactivation. It binds more tightly to the closed state and to a much lesser extent the inactivated/desensitized state of ASIC1a. It interacts directly with the outside surface of the thumb domain of chicken ASIC1a (ASIC1a), but does not insert into the acidic pocket as suggested previously. This binding leads to relocation of the thumb domain that could disrupt the acidic pocket of cASIC1a. The peptide exerts both stimulatory and inhibitory effects on ASIC1a. It reversibly inhibits rASIC1a (IC(50)=17 nM), rASIC1b (IC(50)= 44 nM) and rASIC1a-rASIC2a (IC(50)=252 nM) channels. In vivo, it shows a potent naloxone-resistant analgesic effect against acute and inflammatory pain upon central and peripheral injection. In addition, it also has an opioid-independent effect on both thermal and mechanical inflammatory pain after systemic administration and is effective against neuropathic pain. In Dendroaspis angusticeps (Eastern green mamba), this protein is Mambalgin-3.